Here is a 608-residue protein sequence, read N- to C-terminus: MKWVTFISLFFLFSSAYSRGLVRREAYKSEIAHRYNDLGEEHFRGLVLVAFSQYLQQCPFEDHVKLAKEVTEFAKACAAEESGANCDKSLHTLFGDKLCTVASLRDKYGDMADCCEKQEPDRNECFLAHKDDNPGFPPLVAPEPDALCAAFQDNEQLFLGKYLYEIARRHPYFYAPELLYYAQQYKGVFAECCQAADKAACLGPKIEALREKVLLSSAKERFKCASLQKFGDRAFKAWSVARLSQRFPKADFAEISKVVTDLTKVHKECCHGDLLECADDRADLAKYMCENQDSISTKLKECCDKPVLEKSQCLAEVERDELPGDLPSLAADFVEDKEVCKNYQEAKDVFLGTFLYEYARRHPEYSVSLLLRLAKEYEATLEKCCATDDPPTCYAKVLDEFKPLVDEPQNLVKTNCELFEKLGEYGFQNALLVRYTKKAPQVSTPTLVEVSRKLGKVGTKCCKKPESERMSCAEDFLSVVLNRLCVLHEKTPVSERVTKCCSESLVNRRPCFSGLEVDETYVPKEFNAETFTFHADLCTLPEAEKQVKKQTALVELLKHKPKATDEQLKTVMGDFGAFVEKCCAAENKEGCFSEEGPKLVAAAQAALV.

Residues 1–18 (MKWVTFISLFFLFSSAYS) form the signal peptide. A propeptide spanning residues 19–24 (RGLVRR) is cleaved from the precursor. Albumin domains are found at residues 19–210 (RGLV…EALR), 211–403 (EKVL…EFKP), and 404–601 (LVDE…KLVA). Position 29 is a phosphoserine (Ser-29). Ca(2+)-binding residues include Glu-30 and Asp-37. A disulfide bridge connects residues Cys-77 and Cys-86. Residues Ser-82 and Ser-89 each carry the phosphoserine modification. His-91 is a Zn(2+) binding site. 6 cysteine pairs are disulfide-bonded: Cys-99–Cys-115, Cys-114–Cys-125, Cys-148–Cys-193, Cys-192–Cys-201, Cys-224–Cys-270, and Cys-269–Cys-277. At Lys-229 the chain carries N6-succinyllysine. Ca(2+) is bound at residue Glu-268. Zn(2+)-binding residues include His-271 and Asp-273. Ca(2+) is bound by residues Asp-273, Glu-276, Asp-279, and Asp-283. Intrachain disulfides connect Cys-289/Cys-303, Cys-302/Cys-313, Cys-340/Cys-385, Cys-384/Cys-393, Cys-416/Cys-462, Cys-461/Cys-472, Cys-485/Cys-501, and Cys-500/Cys-511. Ser-443 carries the phosphoserine modification. 2 positions are modified to phosphothreonine: Thr-444 and Thr-446. At Lys-460 the chain carries N6-succinyllysine. Ser-513 carries the phosphoserine modification. 2 disulfide bridges follow: Cys-538–Cys-583 and Cys-582–Cys-591. Lys-558 carries the post-translational modification N6-methyllysine. Thr-570 carries the post-translational modification Phosphothreonine. Lys-588 carries the post-translational modification N6-succinyllysine.

The protein belongs to the ALB/AFP/VDB family. In terms of assembly, interacts with FCGRT; this interaction regulates ALB homeostasis. Interacts with TASOR. In plasma, occurs in a covalently-linked complex with chromophore-bound alpha-1-microglobulin; this interaction does not prevent fatty acid binding to ALB. Post-translationally, phosphorylated by FAM20C in the extracellular medium. Plasma.

The protein resides in the secreted. Functionally, binds water, Ca(2+), Na(+), K(+), fatty acids, hormones, bilirubin and drugs. Its main function is the regulation of the colloidal osmotic pressure of blood. Major zinc transporter in plasma, typically binds about 80% of all plasma zinc. Major calcium and magnesium transporter in plasma, binds approximately 45% of circulating calcium and magnesium in plasma. Potentially has more than two calcium-binding sites and might additionally bind calcium in a non-specific manner. The shared binding site between zinc and calcium at residue Asp-273 suggests a crosstalk between zinc and calcium transport in the blood. The rank order of affinity is zinc &gt; calcium &gt; magnesium. Binds to the bacterial siderophore enterobactin and inhibits enterobactin-mediated iron uptake of E.coli from ferric transferrin, and may thereby limit the utilization of iron and growth of enteric bacteria such as E.coli. Does not prevent iron uptake by the bacterial siderophore aerobactin. In Canis lupus familiaris (Dog), this protein is Albumin (ALB).